A 204-amino-acid polypeptide reads, in one-letter code: Urease accessory protein UreG 1 (204 aa).

A GTP-binding site is contributed by 14-21 (GPVGSGKT).

Belongs to the SIMIBI class G3E GTPase family. UreG subfamily. In terms of assembly, homodimer. UreD, UreF and UreG form a complex that acts as a GTP-hydrolysis-dependent molecular chaperone, activating the urease apoprotein by helping to assemble the nickel containing metallocenter of UreC. The UreE protein probably delivers the nickel.

The protein resides in the cytoplasm. Functionally, facilitates the functional incorporation of the urease nickel metallocenter. This process requires GTP hydrolysis, probably effectuated by UreG. This Methylorubrum extorquens (strain PA1) (Methylobacterium extorquens) protein is Urease accessory protein UreG 1.